A 375-amino-acid chain; its full sequence is Isopentenyl-diphosphate delta-isomerase (375 aa).

8-9 is a substrate binding site; it reads RK. FMN is bound by residues T65, 66–68, S96, and N125; that span reads GMT. Substrate is bound at residue 96–98; that stretch reads SQR. Q160 contributes to the substrate binding site. E161 serves as a coordination point for Mg(2+). FMN is bound by residues K192, T222, 273 to 275, and 294 to 295; these read GVR and AL.

Belongs to the IPP isomerase type 2 family. Homooctamer. Dimer of tetramers. The cofactor is FMN. It depends on NADPH as a cofactor. Mg(2+) is required as a cofactor.

The protein localises to the cytoplasm. It catalyses the reaction isopentenyl diphosphate = dimethylallyl diphosphate. Functionally, involved in the biosynthesis of isoprenoids. Catalyzes the 1,3-allylic rearrangement of the homoallylic substrate isopentenyl (IPP) to its allylic isomer, dimethylallyl diphosphate (DMAPP). The chain is Isopentenyl-diphosphate delta-isomerase from Aeropyrum pernix (strain ATCC 700893 / DSM 11879 / JCM 9820 / NBRC 100138 / K1).